The sequence spans 215 residues: Small ribosomal subunit protein uS3 (215 aa).

Positions 39–107 (VRQYLQKRLA…PVHINIEEIR (69 aa)) constitute a KH type-2 domain.

The protein belongs to the universal ribosomal protein uS3 family. Part of the 30S ribosomal subunit. Forms a tight complex with proteins S10 and S14.

Functionally, binds the lower part of the 30S subunit head. Binds mRNA in the 70S ribosome, positioning it for translation. In Nitrosomonas eutropha (strain DSM 101675 / C91 / Nm57), this protein is Small ribosomal subunit protein uS3.